The primary structure comprises 325 residues: ATP phosphoribosyltransferase (325 aa).

The protein belongs to the ATP phosphoribosyltransferase family. Long subfamily. Mg(2+) serves as cofactor.

It is found in the cytoplasm. It catalyses the reaction 1-(5-phospho-beta-D-ribosyl)-ATP + diphosphate = 5-phospho-alpha-D-ribose 1-diphosphate + ATP. It functions in the pathway amino-acid biosynthesis; L-histidine biosynthesis; L-histidine from 5-phospho-alpha-D-ribose 1-diphosphate: step 1/9. Feedback inhibited by histidine. Catalyzes the condensation of ATP and 5-phosphoribose 1-diphosphate to form N'-(5'-phosphoribosyl)-ATP (PR-ATP). Has a crucial role in the pathway because the rate of histidine biosynthesis seems to be controlled primarily by regulation of HisG enzymatic activity. The protein is ATP phosphoribosyltransferase of Bradyrhizobium diazoefficiens (strain JCM 10833 / BCRC 13528 / IAM 13628 / NBRC 14792 / USDA 110).